The following is a 327-amino-acid chain: ATP-dependent (S)-NAD(P)H-hydrate dehydratase (327 aa).

The region spanning 11-313 (LLTRVKRIIP…RHVGKAYNAL (303 aa)) is the YjeF C-terminal domain. Residues Gly-121 and 174 to 180 (NVIEFKR) contribute to the (6S)-NADPHX site. ATP contacts are provided by residues 209–213 (KGQSD) and 228–237 (GGLKRCGGQG). Asp-238 provides a ligand contact to (6S)-NADPHX.

The protein belongs to the NnrD/CARKD family. Mg(2+) serves as cofactor.

The protein resides in the cytoplasm. It catalyses the reaction (6S)-NADHX + ATP = ADP + phosphate + NADH + H(+). The enzyme catalyses (6S)-NADPHX + ATP = ADP + phosphate + NADPH + H(+). Functionally, catalyzes the dehydration of the S-form of NAD(P)HX at the expense of ATP, which is converted to ADP. Together with NAD(P)HX epimerase, which catalyzes the epimerization of the S- and R-forms, the enzyme allows the repair of both epimers of NAD(P)HX, a damaged form of NAD(P)H that is a result of enzymatic or heat-dependent hydration. The chain is ATP-dependent (S)-NAD(P)H-hydrate dehydratase from Schizosaccharomyces pombe (strain 972 / ATCC 24843) (Fission yeast).